The following is a 38-amino-acid chain: Large ribosomal subunit protein bL36 (38 aa).

It belongs to the bacterial ribosomal protein bL36 family.

In Psychrobacter arcticus (strain DSM 17307 / VKM B-2377 / 273-4), this protein is Large ribosomal subunit protein bL36.